The sequence spans 50 residues: C-C motif chemokine 5 (50 aa).

This sequence belongs to the intercrine beta (chemokine CC) family.

It localises to the secreted. Functionally, chemoattractant for blood monocytes, memory T-helper cells and eosinophils. Causes the release of histamine from basophils and activates eosinophils. May activate several chemokine receptors including CCR1, CCR3, CCR4 and CCR5. May also be an agonist of the G protein-coupled receptor GPR75. Together with GPR75, may play a role in neuron survival through activation of a downstream signaling pathway involving the PI3, Akt and MAP kinases. By activating GPR75 may also play a role in insulin secretion by islet cells. This is C-C motif chemokine 5 (CCL5) from Sus scrofa (Pig).